The sequence spans 146 residues: Cytochrome c-type biogenesis protein CcmE (146 aa).

Over 1–8 (MHPKRKKR) the chain is Cytoplasmic. Residues 9–29 (LLIVLAGLAVVAVASGLILNA) traverse the membrane as a helical; Signal-anchor for type II membrane protein segment. Topologically, residues 30 to 146 (FRSNLVFFHT…IQRAGETVVQ (117 aa)) are periplasmic. The heme site is built by H124 and Y128.

The protein belongs to the CcmE/CycJ family.

The protein resides in the cell inner membrane. In terms of biological role, heme chaperone required for the biogenesis of c-type cytochromes. Transiently binds heme delivered by CcmC and transfers the heme to apo-cytochromes in a process facilitated by CcmF and CcmH. This chain is Cytochrome c-type biogenesis protein CcmE, found in Laribacter hongkongensis (strain HLHK9).